The sequence spans 260 residues: Putative ATP-binding protein BAB2_1147 (260 aa).

Positions 5 to 228 constitute an ABC transporter domain; sequence ISFNNVVMRY…DLPYPRTEAI (224 aa). 37–44 is a binding site for ATP; that stretch reads GPSGCGKS.

The protein belongs to the ABC transporter superfamily. As to quaternary structure, the complex is composed of two ATP-binding proteins (BAB2_1147), two transmembrane proteins (BAB2_1148) and a solute-binding protein (BAB2_1146).

Its subcellular location is the cell inner membrane. In terms of biological role, probably part of an ABC transporter complex. Probably Responsible for energy coupling to the transport system. The sequence is that of Putative ATP-binding protein BAB2_1147 from Brucella abortus (strain 2308).